Reading from the N-terminus, the 202-residue chain is Recombination protein RecR (202 aa).

The segment at 61-76 (CARCNSFTEDEVCATC) adopts a C4-type zinc-finger fold. A Toprim domain is found at 84-179 (GLLCIVETPA…KVTRLARGVP (96 aa)).

Belongs to the RecR family.

In terms of biological role, may play a role in DNA repair. It seems to be involved in an RecBC-independent recombinational process of DNA repair. It may act with RecF and RecO. In Bordetella bronchiseptica (strain ATCC BAA-588 / NCTC 13252 / RB50) (Alcaligenes bronchisepticus), this protein is Recombination protein RecR.